A 495-amino-acid chain; its full sequence is L-arabinose isomerase (495 aa).

Mn(2+)-binding residues include Glu-305, Glu-332, His-349, and His-448.

The protein belongs to the arabinose isomerase family. Mn(2+) serves as cofactor.

It carries out the reaction beta-L-arabinopyranose = L-ribulose. It functions in the pathway carbohydrate degradation; L-arabinose degradation via L-ribulose; D-xylulose 5-phosphate from L-arabinose (bacterial route): step 1/3. In terms of biological role, catalyzes the conversion of L-arabinose to L-ribulose. This Actinobacillus succinogenes (strain ATCC 55618 / DSM 22257 / CCUG 43843 / 130Z) protein is L-arabinose isomerase.